The chain runs to 160 residues: Ribosomal RNA large subunit methyltransferase H (160 aa).

Residues L76, G108, and 127-132 each bind S-adenosyl-L-methionine; that span reads LGELTW.

It belongs to the RNA methyltransferase RlmH family. In terms of assembly, homodimer.

Its subcellular location is the cytoplasm. It carries out the reaction pseudouridine(1915) in 23S rRNA + S-adenosyl-L-methionine = N(3)-methylpseudouridine(1915) in 23S rRNA + S-adenosyl-L-homocysteine + H(+). Functionally, specifically methylates the pseudouridine at position 1915 (m3Psi1915) in 23S rRNA. In Brucella anthropi (strain ATCC 49188 / DSM 6882 / CCUG 24695 / JCM 21032 / LMG 3331 / NBRC 15819 / NCTC 12168 / Alc 37) (Ochrobactrum anthropi), this protein is Ribosomal RNA large subunit methyltransferase H.